The following is a 485-amino-acid chain: MYKMNICNKPSNKTAPEKSVWTAPAQPSGPSPELQGQRSRRNGWSWPPHPLQIVAWLLYLFFAVIGFGILVPLLPHHWVPAGYACMGAIFAGHLVVHLTAVSIDPADANVRDKSYAGPLPIFNRSQHAHVIEDLHCNLCNVDVSARSKHCSACNKCVCGFDHHCKWLNNCVGERNYRLFLHSVASALLGVLLLVLVATYVFVEFFVNPMRLRTNRHFEVLKNHTDVWFVFLPAAPVETQAPAILALAALLILLGLLSTALLGHLLCFHIYLMWHKLTTYEYIVQHRPPQEAKGVHRELESCPPKMRPIQEMEFYMRTFRHMRPEPPGQAGPAAVNAKHSRPASPDPTPGRRDCAGPPVQVEWDRKKPLPWRSPLLLLAMWGPQAPPCLCRKRGRGACIKCERLRPRIRRRGLGPPAAAPARRRIPRTPALCTPLALPAPTTRRRQSPWTRFQWRRRAWAAPLWPPRGAGADSPRWRGRRVRPPFS.

The tract at residues 1–41 is disordered; it reads MYKMNICNKPSNKTAPEKSVWTAPAQPSGPSPELQGQRSRR. Residues 1–52 lie on the Cytoplasmic side of the membrane; that stretch reads MYKMNICNKPSNKTAPEKSVWTAPAQPSGPSPELQGQRSRRNGWSWPPHPLQ. Residues 1-271 are mediates interaction with STING1; the sequence is MYKMNICNKP…GHLLCFHIYL (271 aa). A helical membrane pass occupies residues 53 to 73; that stretch reads IVAWLLYLFFAVIGFGILVPL. Over 74-77 the chain is Lumenal; the sequence is LPHH. A helical membrane pass occupies residues 78 to 98; the sequence is WVPAGYACMGAIFAGHLVVHL. Over 99–185 the chain is Cytoplasmic; it reads TAVSIDPADA…YRLFLHSVAS (87 aa). The 51-residue stretch at 134 to 184 folds into the DHHC domain; it reads LHCNLCNVDVSARSKHCSACNKCVCGFDHHCKWLNNCVGERNYRLFLHSVA. Cysteine 164 serves as the catalytic S-palmitoyl cysteine intermediate. Residues 186–206 form a helical membrane-spanning segment; the sequence is ALLGVLLLVLVATYVFVEFFV. Residues 207–241 lie on the Lumenal side of the membrane; it reads NPMRLRTNRHFEVLKNHTDVWFVFLPAAPVETQAP. The chain crosses the membrane as a helical span at residues 242–262; sequence AILALAALLILLGLLSTALLG. Residues 263–485 lie on the Cytoplasmic side of the membrane; it reads HLLCFHIYLM…RGRRVRPPFS (223 aa). Disordered stretches follow at residues 324 to 358 and 462 to 485; these read EPPG…GPPV and LWPP…PPFS. The segment covering 475-485 has biased composition (basic residues); the sequence is WRGRRVRPPFS.

It belongs to the DHHC palmitoyltransferase family. As to quaternary structure, interacts with STING1; ZDHHC1 constitutively interacts with STING1 and in presence of DNA viruses activates it by promoting its cGAMP-induced oligomerization and the recruitment of downstream signaling components. In terms of tissue distribution, widely expressed with significant expression in heart, brain, placenta, lung, liver, kidney, testis, thymus and small intestine. Expressed at lower levels in adult pancreas and lung.

It is found in the endosome membrane. The protein resides in the endoplasmic reticulum membrane. Its subcellular location is the golgi apparatus. The catalysed reaction is L-cysteinyl-[protein] + hexadecanoyl-CoA = S-hexadecanoyl-L-cysteinyl-[protein] + CoA. Functionally, palmitoyltransferase that catalyzes the addition of palmitate onto various protein substrates, such as NCDN and NLRP3. Has a palmitoyltransferase activity toward NCDN and regulates NCDN association with endosome membranes through this palmitoylation. Acts as an activator of the NLRP3 inflammasome by mediating palmitoylation of 'Cys-130' and 'Cys-958' of NLRP3, thereby promoting NLRP3 phosphorylation and activation by NEK7. Also has a palmitoyltransferase activity-independent function in DNA virus-triggered and CGAS-mediated innate immune response. Functions as an activator of STING1 by promoting its cGAMP-induced oligomerization and the recruitment of downstream signaling components. The sequence is that of Palmitoyltransferase ZDHHC1 from Homo sapiens (Human).